Consider the following 234-residue polypeptide: Proteasome subunit alpha (234 aa).

Belongs to the peptidase T1A family. As to quaternary structure, the 20S proteasome core is composed of 14 alpha and 14 beta subunits that assemble into four stacked heptameric rings, resulting in a barrel-shaped structure. The two inner rings, each composed of seven catalytic beta subunits, are sandwiched by two outer rings, each composed of seven alpha subunits. The catalytic chamber with the active sites is on the inside of the barrel. Has a gated structure, the ends of the cylinder being occluded by the N-termini of the alpha-subunits. Is capped by the proteasome-associated ATPase, ARC.

The protein resides in the cytoplasm. The protein operates within protein degradation; proteasomal Pup-dependent pathway. Its activity is regulated as follows. The formation of the proteasomal ATPase ARC-20S proteasome complex, likely via the docking of the C-termini of ARC into the intersubunit pockets in the alpha-rings, may trigger opening of the gate for substrate entry. Interconversion between the open-gate and close-gate conformations leads to a dynamic regulation of the 20S proteasome proteolysis activity. Its function is as follows. Component of the proteasome core, a large protease complex with broad specificity involved in protein degradation. This chain is Proteasome subunit alpha, found in Acidothermus cellulolyticus (strain ATCC 43068 / DSM 8971 / 11B).